The chain runs to 188 residues: MKASTVLQIAYLVSQESKCCSWKVGAVIEKNGRIISTGYNGSPAGGVNCDNYAAIEGWLLNKPKHTIIQGHKPECVSFGTSDRFVLAKEHRSAHSEWSSKNEIHAELNAILFAARNGSSIEGATMYVTLSPCPDCAKAIAQSGIKKLVYCETYDKNKPGWDDILRNAGIEVFNVPKLNWENISEFCGE.

Residues 1–171 (MKASTVLQIA…DILRNAGIEV (171 aa)) form the CMP/dCMP-type deaminase domain. Positions 19, 49, 94, 102, and 104 each coordinate Zn(2+). Residue E106 is the Proton donor of the active site. Zn(2+)-binding residues include C132 and C135.

Belongs to the cytidine and deoxycytidylate deaminase family. Homohexamer. Zn(2+) is required as a cofactor.

The catalysed reaction is dCMP + H2O + H(+) = dUMP + NH4(+). Its activity is regulated as follows. Allosteric enzyme whose activity is greatly influenced by the end products of its metabolic pathway, dCTP and dTTP. In terms of biological role, supplies the nucleotide substrate for thymidylate synthetase. The protein is Deoxycytidylate deaminase (CD) of Enterobacteria phage T2 (Bacteriophage T2).